Consider the following 387-residue polypeptide: Type 2 DNA topoisomerase 6 subunit A (387 aa).

Residues 12 to 160 (EARKKAADTL…MLILSKEKGK (149 aa)) enclose the Topo IIA-type catalytic domain. Residue Tyr106 is the O-(5'-phospho-DNA)-tyrosine intermediate of the active site. Residues Glu207 and Asp259 each contribute to the Mg(2+) site.

The protein belongs to the TOP6A family. As to quaternary structure, homodimer. Heterotetramer of two Top6A and two Top6B chains. The cofactor is Mg(2+).

It catalyses the reaction ATP-dependent breakage, passage and rejoining of double-stranded DNA.. Its function is as follows. Relaxes both positive and negative superturns and exhibits a strong decatenase activity. The sequence is that of Type 2 DNA topoisomerase 6 subunit A from Sulfurisphaera tokodaii (strain DSM 16993 / JCM 10545 / NBRC 100140 / 7) (Sulfolobus tokodaii).